The sequence spans 342 residues: 6-hydroxytryprostatin B O-methyltransferase (342 aa).

Position 201 (aspartate 201) interacts with S-adenosyl-L-methionine. Histidine 244 (proton acceptor) is an active-site residue.

It belongs to the class I-like SAM-binding methyltransferase superfamily. Cation-independent O-methyltransferase family. In terms of assembly, homodimer.

The enzyme catalyses 6-hydroxytryprostatin B + S-adenosyl-L-methionine = tryprostatin A + S-adenosyl-L-homocysteine + H(+). The protein operates within alkaloid biosynthesis. 6-hydroxytryprostatin B O-methyltransferase; part of the gene cluster that mediates the biosynthesis of fumitremorgins, indole alkaloids that carry not only intriguing chemical structures, but also interesting biological and pharmacological activities. The biosynthesis of fumitremorgin-type alkaloids begins by condensation of the two amino acids L-tryptophan and L-proline to brevianamide F, catalyzed by the non-ribosomal peptide synthetase ftmA. Brevianamide F is then prenylated by the prenyltransferase ftmPT1/ftmB in the presence of dimethylallyl diphosphate, resulting in the formation of tryprostatin B. The three cytochrome P450 monooxygenases, ftmP450-1/ftmC, ftmP450-2/ftmE and ftmP450-3/FtmG, are responsible for the conversion of tryprostatin B to 6-hydroxytryprostatin B, tryprostatin A to fumitremorgin C and fumitremorgin C to 12,13-dihydroxyfumitremorgin C, respectively. The putative methyltransferase ftmMT/ftmD is expected for the conversion of 6-hydroxytryprostatin B to tryprostatin A. FtmPT2/FtmH catalyzes the prenylation of 12,13-dihydroxyfumitre-morgin C in the presence of dimethylallyl diphosphate, resulting in the formation of fumitremorgin B. Fumitremorgin B is further converted to verruculogen by ftmOx1/ftmF via the insertion of an endoperoxide bond between the two prenyl moieties. In some fungal species, verruculogen is further converted to fumitremorgin A, but the enzymes involved in this step have not been identified yet. This is 6-hydroxytryprostatin B O-methyltransferase from Aspergillus fumigatus (Neosartorya fumigata).